The chain runs to 271 residues: Shikimate dehydrogenase (NADP(+)) (271 aa).

Residues 14 to 16 (SQS) and Thr-61 each bind shikimate. Lys-65 functions as the Proton acceptor in the catalytic mechanism. The shikimate site is built by Asn-86 and Asp-101. Residues 125-129 (GAGGA), 148-153 (NRTHAR), and Met-212 each bind NADP(+). Tyr-214 serves as a coordination point for shikimate. Gly-236 is a binding site for NADP(+).

Belongs to the shikimate dehydrogenase family. As to quaternary structure, homodimer.

The enzyme catalyses shikimate + NADP(+) = 3-dehydroshikimate + NADPH + H(+). It participates in metabolic intermediate biosynthesis; chorismate biosynthesis; chorismate from D-erythrose 4-phosphate and phosphoenolpyruvate: step 4/7. Functionally, involved in the biosynthesis of the chorismate, which leads to the biosynthesis of aromatic amino acids. Catalyzes the reversible NADPH linked reduction of 3-dehydroshikimate (DHSA) to yield shikimate (SA). In Edwardsiella ictaluri (strain 93-146), this protein is Shikimate dehydrogenase (NADP(+)).